The chain runs to 110 residues: uncharacterized protein (110 aa).

Helical transmembrane passes span 4-26, 46-68, and 72-91; these read LVGG…KSIN, ANRY…GLLL, and LFIL…FMLT.

It localises to the cell membrane. This is an uncharacterized protein from Bacillus subtilis (strain 168).